The primary structure comprises 535 residues: Pentatricopeptide repeat-containing protein At5g16420, mitochondrial (535 aa).

The transit peptide at 1–28 directs the protein to the mitochondrion; sequence MFLSRVNPTRFPPFVASRRLFSASASAA. PPR repeat units follow at residues 82–112, 119–153, 154–189, 190–224, 225–259, 260–294, 295–329, 330–364, 365–395, 399–433, 434–468, and 469–503; these read NYDT…LRNS, GENL…GVKR, SVRS…GITP, NIFT…GLVP, NLVT…GWYP, DATT…EIEP, NEVT…SFMP, DSSL…NCMP, DNAL…FEKG, SLLT…KCKP, NAFT…GCFP, and NKTT…GKVD.

It belongs to the PPR family. P subfamily.

It localises to the mitochondrion. This chain is Pentatricopeptide repeat-containing protein At5g16420, mitochondrial, found in Arabidopsis thaliana (Mouse-ear cress).